We begin with the raw amino-acid sequence, 343 residues long: E3 ubiquitin-protein ligase RNF113A (343 aa).

N-acetylalanine is present on A2. The important for interaction with SNRNP200/BRR2 stretch occupies residues 2–60; the sequence is AEQLSPGKTTDQVCTFLFKKPGRKVAAGRRKRPICNQESGDSSSSSDEGNTVVRPEKKR. S6 is subject to Phosphoserine. Residues 23 to 34 show a composition bias toward basic residues; sequence GRKVAAGRRKRP. The disordered stretch occupies residues 23–95; that stretch reads GRKVAAGRRK…EEEEENKSES (73 aa). A compositionally biased stretch (low complexity) spans 39–50; it reads ESGDSSSSSDEG. The interval 50–61 is important for interaction with CXCR4; it reads GNTVVRPEKKRA. A phosphoserine mark is found at S84 and S85. The C3H1-type zinc-finger motif lies at 196 to 224; that stretch reads DYQPDICKDYKETGFCGFGDSCKFLHDRS. At S253 the chain carries Phosphoserine. The RING-type zinc-finger motif lies at 262-300; sequence CFICRQTFQNPVVTKCRHYFCESCALQHFRTTPRCYVCD. The segment at 323–343 is disordered; that stretch reads AEGGGASGFPEDPDEDPVPIT. Residues 333–343 are compositionally biased toward acidic residues; sequence EDPDEDPVPIT.

As to quaternary structure, component of pre-catalytic and catalytic spliceosome complexes. Interacts (via N-terminus) with the spliceosome subunit SNRNP200/BRR2. Component of the minor spliceosome. Within this complex, interacts with SCNM1 and CRIPT.

Its subcellular location is the nucleus. The protein localises to the nucleus speckle. The catalysed reaction is S-ubiquitinyl-[E2 ubiquitin-conjugating enzyme]-L-cysteine + [acceptor protein]-L-lysine = [E2 ubiquitin-conjugating enzyme]-L-cysteine + N(6)-ubiquitinyl-[acceptor protein]-L-lysine.. It participates in protein modification; protein ubiquitination. In terms of biological role, required for pre-mRNA splicing as component of the spliceosome. As a component of the minor spliceosome, involved in the splicing of U12-type introns in pre-mRNAs. E3 ubiquitin-protein ligase that catalyzes the transfer of ubiquitin onto target proteins. Catalyzes polyubiquitination of SNRNP200/BRR2 with non-canonical 'Lys-63'-linked polyubiquitin chains. Plays a role in DNA repair via its role in the synthesis of 'Lys-63'-linked polyubiquitin chains that recruit ALKBH3 and the ASCC complex to sites of DNA damage by alkylating agents. Ubiquitinates CXCR4, leading to its degradation, and thereby contributes to the termination of CXCR4 signaling. The polypeptide is E3 ubiquitin-protein ligase RNF113A (RNF113A) (Bos taurus (Bovine)).